Here is a 130-residue protein sequence, read N- to C-terminus: Tripartite terminase subunit 2 (130 aa).

This sequence belongs to the herpesviridae TRM2 protein family. In terms of assembly, associates with TRM1 and TRM3 to form the tripartite terminase complex.

It localises to the host nucleus. In terms of biological role, component of the molecular motor that translocates viral genomic DNA in empty capsid during DNA packaging. Forms a tripartite terminase complex together with TRM1 and TRM3 in the host cytoplasm. Once the complex reaches the host nucleus, it interacts with the capsid portal vertex. This portal forms a ring in which genomic DNA is translocated into the capsid. The chain is Tripartite terminase subunit 2 from Homo sapiens (Human).